We begin with the raw amino-acid sequence, 302 residues long: Recombination-associated protein RdgC (302 aa).

It belongs to the RdgC family.

The protein resides in the cytoplasm. The protein localises to the nucleoid. May be involved in recombination. In Tolumonas auensis (strain DSM 9187 / NBRC 110442 / TA 4), this protein is Recombination-associated protein RdgC.